Consider the following 84-residue polypeptide: MKTLLLTLVVVTIVCLDLGYTRKCLNTPLPLIYKTCPIGQDKCIKMTIKKLPSKYDVIRGCTDICPKSSADVVVVCCDTNKCNK.

Residues 1 to 21 (MKTLLLTLVVVTIVCLDLGYT) form the signal peptide. 4 disulfides stabilise this stretch: Cys24–Cys43, Cys36–Cys61, Cys65–Cys76, and Cys77–Cys82.

Belongs to the three-finger toxin family. Short-chain subfamily. Aminergic toxin sub-subfamily. In terms of tissue distribution, expressed by the venom gland.

Its subcellular location is the secreted. In terms of biological role, acts as a beta-blocker by binding to beta-1 and beta-2 adrenergic receptors (ADRB1 and ADRB2). It dose-dependently decreases the heart rate (bradycardia), whereas conventional cardiotoxins increases it. At 100 mg/kg, intraperitoneal injection into mice provokes labored breathing, impaired locomotion, lack of response to external stimuli, and death (after 30 minutes). The chain is Beta-cardiotoxin CTX23 from Ophiophagus hannah (King cobra).